Here is a 120-residue protein sequence, read N- to C-terminus: T-cell receptor beta chain V region PHDS203 (120 aa).

An N-terminal signal peptide occupies residues 1–11 (VVLCFLGTGLV). The segment at 12–106 (DMKVTQMSRY…TSVYFCAQGA (95 aa)) is v segment. Cys-34 and Cys-102 are joined by a disulfide. Residues 107–120 (PEQYFGPGTRLTVL) form a j segment region.

The sequence is that of T-cell receptor beta chain V region PHDS203 from Mus musculus (Mouse).